Consider the following 533-residue polypeptide: Tyrosine protein-kinase src-1 (533 aa).

Glycine 2 carries N-myristoyl glycine lipidation. The SH3 domain occupies 71–132 (QERETLVALY…PRNFVAKQQT (62 aa)). Residues 138–237 (WYAGKIPRNR…GLCCQLTFPA (100 aa)) enclose the SH2 domain. One can recognise a Protein kinase domain in the interval 262–521 (LHLKRKLGDG…TLYHFFDDYF (260 aa)). Residues 268 to 276 (LGDGNFGEV) and lysine 290 contribute to the ATP site. The active-site Proton acceptor is the aspartate 381. Tyrosine 416 bears the Phosphotyrosine; by autocatalysis mark. A Phosphotyrosine modification is found at tyrosine 528.

Belongs to the protein kinase superfamily. Tyr protein kinase family. SRC subfamily. As to quaternary structure, interacts (via SH2 domain and SH3 domain) with unc-5 (via cytoplasmic domain); the interaction requires kinase activity. Interacts (when activated and phosphorylated at 'Tyr-416') with ina-1 (via cytoplasmic domain) and with ced-2 (via SH2 domain). The cofactor is Mg(2+). Mn(2+) serves as cofactor. Post-translationally, may be phosphorylated on Tyr-528 by csk-1. Expressed in some neurons (ASE, ADF, AVA, AUA, RMDV and BAG) in the head region, anchor cell, vulva, cells around anus, body wall muscle, pharyngeal muscles in procorpus and metacorpus. Expressed in gonadal distal tip cells.

It is found in the cell membrane. Its subcellular location is the cell projection. The protein localises to the phagocytic cup. It carries out the reaction L-tyrosyl-[protein] + ATP = O-phospho-L-tyrosyl-[protein] + ADP + H(+). Its activity is regulated as follows. May be activated by autophosphorylation. May be inhibited by csk-1-mediated phosphorylation. In terms of biological role, non-receptor tyrosine-protein kinase which plays a role in endoderm development by controlling spindle orientation in EMS blastomere, probably downstream of receptor mes-1. Also involved in embryonic body morphogenesis, especially in the formation of the pharynx and the intestine. May be dispensable for pharyngeal muscle organization in the adult. Probably phosphorylates netrin receptor unc-5, to regulate distal tip cell (DTC) migration during gonad development and in axon repulsion. Plays a role in the migration of the QR neuroblast, a precursor of the AVM neuron, and in the migration of the axon cone of AVM, ALM, CAN and PVM neurons. May act downstream of migratory protein mig-13 to control AVM neuron migration. Probably downstream of integrin ina-1/pat-3, plays a role in the clearance of apoptotic cells during mid-embryogenesis. Phosphorylates ced-1 at 'Tyr-1019' which promotes ced-1 proteasomal degradation, maintaining appropriate ced-1 levels for apoptotic cell clearance. The protein is Tyrosine protein-kinase src-1 of Caenorhabditis elegans.